A 335-amino-acid chain; its full sequence is Adenosine deaminase (335 aa).

Residues His-12 and His-14 each contribute to the Zn(2+) site. Residues His-14 and Asp-16 each coordinate substrate. His-197 is a Zn(2+) binding site. Catalysis depends on Glu-200, which acts as the Proton donor. Zn(2+) is bound at residue Asp-278.

It belongs to the metallo-dependent hydrolases superfamily. Adenosine and AMP deaminases family. Adenosine deaminase subfamily. Zn(2+) serves as cofactor.

The catalysed reaction is adenosine + H2O + H(+) = inosine + NH4(+). It carries out the reaction 2'-deoxyadenosine + H2O + H(+) = 2'-deoxyinosine + NH4(+). Its function is as follows. Catalyzes the hydrolytic deamination of adenosine and 2-deoxyadenosine. This chain is Adenosine deaminase, found in Clostridium botulinum (strain Kyoto / Type A2).